Here is a 185-residue protein sequence, read N- to C-terminus: Peptidyl-tRNA hydrolase (185 aa).

TRNA is bound at residue Tyr-14. His-19 serves as the catalytic Proton acceptor. Tyr-65, Asn-67, and Asn-113 together coordinate tRNA.

The protein belongs to the PTH family. As to quaternary structure, monomer.

The protein resides in the cytoplasm. The enzyme catalyses an N-acyl-L-alpha-aminoacyl-tRNA + H2O = an N-acyl-L-amino acid + a tRNA + H(+). Functionally, hydrolyzes ribosome-free peptidyl-tRNAs (with 1 or more amino acids incorporated), which drop off the ribosome during protein synthesis, or as a result of ribosome stalling. Its function is as follows. Catalyzes the release of premature peptidyl moieties from peptidyl-tRNA molecules trapped in stalled 50S ribosomal subunits, and thus maintains levels of free tRNAs and 50S ribosomes. The polypeptide is Peptidyl-tRNA hydrolase (Rickettsia bellii (strain RML369-C)).